We begin with the raw amino-acid sequence, 537 residues long: MIETGLRNSSQGIETFGLRNLAGVHWNLTEPQLYEHAIAKGEARLAAGGALAANTGVHTGRSPKDKFVVRDATTEGEVWWDNNGSITPEQFETLYQDFLAAAEGKTLFAQDLYGGADPAHRIAARVYTEYAWHSLFIRTMLRRPAREELPGYVPELTIIDLPSFKADPARHGVRSDTIIAVNFTRRIVLIGSSSYAGEMKKSVFTFLNYLLPAKGVMPMHCSANAGKDGDVALFFGLSGTGKTTLSADPARTLLGDDEHGWSNTGVFNFEGGCYAKTIRLSKEAEPEIFAASDRFGTILENVILHEDTRVPDFDDGSLTENTRSAYPLDFIPNASPTGRAGVPKNIIMLTADAFGVMPPIARLTPAQAMYHFLSGYTAKVAGTEKGVKDPEATFSTCFGAPFMPRHPSVYGNLLRDLIAKYQVDCWLVNTGWTGGKYGVGRRMPIKVTRTLLTAALDGSLKDAAFRTDPYFGFSVPSSVPGIEPHILYPSKTWADKADFDATARKLVAMFRDNFAKFEGHVDAAVRDAQPQVRIAAE.

Substrate contacts are provided by Arg61, Tyr195, and Lys201. ATP contacts are provided by residues Lys201, His220, and 236–244 (GLSGTGKTT). Residues Lys201 and His220 each contribute to the Mn(2+) site. Asp257 is a binding site for Mn(2+). Glu285, Arg323, and Thr448 together coordinate ATP. A substrate-binding site is contributed by Arg323.

It belongs to the phosphoenolpyruvate carboxykinase (ATP) family. Requires Mn(2+) as cofactor.

It localises to the cytoplasm. The enzyme catalyses oxaloacetate + ATP = phosphoenolpyruvate + ADP + CO2. It functions in the pathway carbohydrate biosynthesis; gluconeogenesis. In terms of biological role, involved in the gluconeogenesis. Catalyzes the conversion of oxaloacetate (OAA) to phosphoenolpyruvate (PEP) through direct phosphoryl transfer between the nucleoside triphosphate and OAA. The chain is Phosphoenolpyruvate carboxykinase (ATP) from Azorhizobium caulinodans (strain ATCC 43989 / DSM 5975 / JCM 20966 / LMG 6465 / NBRC 14845 / NCIMB 13405 / ORS 571).